The primary structure comprises 209 residues: Octanoyltransferase (209 aa).

The BPL/LPL catalytic domain maps to 30 to 209 (DHEPEIIYLV…IQTEFNKIFK (180 aa)). Residues 69-76 (RGGKFTFH), 143-145 (AIG), and 156-158 (GVA) each bind substrate. The Acyl-thioester intermediate role is filled by C174.

This sequence belongs to the LipB family.

The protein resides in the cytoplasm. The enzyme catalyses octanoyl-[ACP] + L-lysyl-[protein] = N(6)-octanoyl-L-lysyl-[protein] + holo-[ACP] + H(+). The protein operates within protein modification; protein lipoylation via endogenous pathway; protein N(6)-(lipoyl)lysine from octanoyl-[acyl-carrier-protein]: step 1/2. Catalyzes the transfer of endogenously produced octanoic acid from octanoyl-acyl-carrier-protein onto the lipoyl domains of lipoate-dependent enzymes. Lipoyl-ACP can also act as a substrate although octanoyl-ACP is likely to be the physiological substrate. The protein is Octanoyltransferase of Rickettsia africae (strain ESF-5).